Reading from the N-terminus, the 588-residue chain is MFS siderochrome iron transporter 1 (588 aa).

Transmembrane regions (helical) follow at residues 60–80, 104–124, 133–153, 161–181, 191–211, 225–245, 278–298, 307–327, 348–368, 385–405, 413–433, 440–460, and 473–495; these read QVWSKGHLIFAYVMIWVITFV, LTASTMIMSNIIGGLIKLPLA, PQGFLIMVGALTIGLVMMAAC, AAQVFYWVGYNGMSYTISIFI, ALMFAFVSSPYIATVWVGGPL, YGAFAIITPAITCPLYAVFAW, IIGIILLASGLALFLLPFSLY, SSLVISMIIVGGLLLIAFALY, LGACILAASLFVSFYIWDSYF, YIVNIYSIGACFWSIIVGILV, WLALYFGVPLTILGVGLMITF, IGYIIMCQIFIAFAGGTCVIT, and YVAVVLAVESMFANIGGAIGQTV. N-linked (GlcNAc...) asparagine glycosylation is present at Asn-519. The chain crosses the membrane as a helical span at residues 552 to 572; the sequence is KYMLIGGTAILAVGLGATMMW.

The protein belongs to the major facilitator superfamily.

Its subcellular location is the membrane. In terms of biological role, major facilitator transporter involved in siderophore transport. This chain is MFS siderochrome iron transporter 1, found in Ajellomyces capsulatus (Darling's disease fungus).